We begin with the raw amino-acid sequence, 407 residues long: Zinc finger protein 260 (407 aa).

A disordered region spans residues 1 to 21; the sequence is MLESLQPESELLHDEPDPGEK. Positions 10 to 21 are enriched in basic and acidic residues; that stretch reads ELLHDEPDPGEK. The C2H2-type 1 zinc finger occupies 23-45; sequence YECDECRKTFSLEQHFVEHKKTH. The C2H2-type 2; degenerate zinc finger occupies 51-73; it reads PECTGCGEEFSKASSLTRHLRSR. C2H2-type zinc fingers lie at residues 79–101, 131–153, 159–181, 187–209, 215–237, 243–265, 271–293, 299–321, 327–349, 355–377, and 383–405; these read YKCGNCGRTFSQRGNFLSHQKQH, YACKECGKAFNGKSYLKEHEKIH, FECNQCGRAFSQKQYLIKHQNVH, FKCNECGKAFSQKENLIIHQRIH, YECKGCGKAFIQKSSLIRHQRSH, YTCKECGKAFSGKSNLTEHEKIH, YKCNECGTIFRQKQYLIKHHNIH, YECNKCGKAFSRITSLIVHVRIH, YECKVCGKAFCQSSSLTVHMRSH, YGCNECGKAFSQFSTLALHMRIH, and YQCSECGKAFSQKSHHIRHQRIH.

Belongs to the krueppel C2H2-type zinc-finger protein family. As to quaternary structure, binds DNA. Interacts with GATA4. In terms of tissue distribution, expressed in both embryonic, fetal and adult heart. Also expressed in lung, skeletal muscle and adrenal glands.

The protein localises to the nucleus. Its function is as follows. Transcription factor that acts as a cardiac regulator and an effector of alpha1-adrenergic signaling. Binds to PE response elements (PERE) present in the promoter of genes such as ANF/NPPA and acts as a direct transcriptional activator of NPPA. Also acts as a cofactor with GATA4, a key cardiac regulator. In Rattus norvegicus (Rat), this protein is Zinc finger protein 260 (Znf260).